A 133-amino-acid chain; its full sequence is Putative N-acetylgalactosamine permease IIC component 2 (133 aa).

The Cytoplasmic portion of the chain corresponds to 1–2 (ME). The region spanning 1–133 (MEISLLQAFA…CDLATNPRRI (133 aa)) is the PTS EIIC type-4 domain. The chain crosses the membrane as a helical span at residues 3–23 (ISLLQAFALGIIAFIAGLDMF). At 24–32 (NGLTHMHRP) the chain is on the periplasmic side. A helical transmembrane segment spans residues 33 to 53 (VVLGPLVGLVLGDLHTGILTG). Residues 54–65 (GTLELVWMGLAP) lie on the Cytoplasmic side of the membrane. A helical transmembrane segment spans residues 66-86 (LAGAQPPNVIIGTIVGTAFAI). Residues 87-93 (TTGVKPD) lie on the Periplasmic side of the membrane. The helical transmembrane segment at 94–114 (VAVGVAVPFAVAVQMGITFLF) threads the bilayer. Topologically, residues 115–133 (SVMSGVMSRCDLATNPRRI) are cytoplasmic.

Its subcellular location is the cell inner membrane. In terms of biological role, the phosphoenolpyruvate-dependent sugar phosphotransferase system (PTS), a major carbohydrate active -transport system, catalyzes the phosphorylation of incoming sugar substrates concomitant with their translocation across the cell membrane. This system is involved in N-acetylgalactosamine transport. The sequence is that of Putative N-acetylgalactosamine permease IIC component 2 (agaW) from Escherichia coli (strain K12).